The chain runs to 222 residues: MSSEEVRHRAESSEARAAAVSDIQELMRRKEEIEAQIKANYDVLESQKGIGMNEPLVDCEGYPRADVDLYQVRTARHNIICLQNDHKALMKQVEEALHQLHARDKEKQARDMAEAREEAMNRRLASDSPALPKAFARVNSISPGSPASIAGLQVDDEIVEFGSVNTQNFQSLQNVGTVVQHSEGKPLNVMVIRRGEKHQLRLTPTRWAGKGLLGCNITPLQR.

Positions 108–194 (QARDMAEARE…KPLNVMVIRR (87 aa)) constitute a PDZ domain. Phosphoserine is present on Ser-128.

It belongs to the proteasome subunit p27 family. Interacts with PSMC3. Part of a transient complex (modulator) containing PSMD9, PSMC6 and PSMC3 formed during the assembly of the 26S proteasome.

Acts as a chaperone during the assembly of the 26S proteasome, specifically of the base subcomplex of the PA700/19S regulatory complex (RC). During the base subcomplex assembly is part of an intermediate PSMD9:PSMC6:PSMC3 module, also known as modulator trimer complex; PSMD9 is released during the further base assembly process. The chain is 26S proteasome non-ATPase regulatory subunit 9 (Psmd9) from Rattus norvegicus (Rat).